We begin with the raw amino-acid sequence, 170 residues long: CASP-like protein 1F1 (170 aa).

Residues 1–16 (MMGDNEGRRTPLLNLG) are Cytoplasmic-facing. The helical transmembrane segment at 17 to 37 (VQVSMRVLIIGAAMASMWVMI) threads the bilayer. Residues 38–62 (TNREVASVYGIAFEAKYSYSSAFRY) lie on the Extracellular side of the membrane. A helical transmembrane segment spans residues 63-83 (LVYAQIAVCAATLFTLVWACL). Residues 84–88 (AVRRR) are Cytoplasmic-facing. The helical transmembrane segment at 89 to 109 (GLVFALFFFDLLTTLTAISAF) threads the bilayer. Topologically, residues 110–141 (SAAFAEGYVGKYGNKQAGWLPICGYVHVYCSR) are extracellular. Residues 142 to 162 (VTISLAMSFASFVLLFILTVL) form a helical membrane-spanning segment. Over 163–170 (TASSARHY) the chain is Cytoplasmic.

The protein belongs to the Casparian strip membrane proteins (CASP) family. As to quaternary structure, homodimer and heterodimers.

It is found in the cell membrane. This is CASP-like protein 1F1 from Arabidopsis lyrata subsp. lyrata (Lyre-leaved rock-cress).